The chain runs to 22 residues: Peptide PGLa-B1 (22 aa).

Residue Leu22 is modified to Leucine amide.

Expressed by the skin glands.

It localises to the secreted. Functionally, has antibacterial and antifungal activity. The sequence is that of Peptide PGLa-B1 from Xenopus borealis (Kenyan clawed frog).